Reading from the N-terminus, the 196-residue chain is Guanylate kinase (196 aa).

The region spanning 7–191 (RNIVLLVGPS…AAEEIEKIIL (185 aa)) is the Guanylate kinase-like domain. 14–21 (GPSGVGKG) contributes to the ATP binding site.

It belongs to the guanylate kinase family.

Its subcellular location is the cytoplasm. The catalysed reaction is GMP + ATP = GDP + ADP. Essential for recycling GMP and indirectly, cGMP. In Mycoplasmopsis pulmonis (strain UAB CTIP) (Mycoplasma pulmonis), this protein is Guanylate kinase.